Here is a 502-residue protein sequence, read N- to C-terminus: Glutamate decarboxylase 1 (502 aa).

Residue Ser8 is modified to Phosphoserine. Lys277 carries the post-translational modification N6-(pyridoxal phosphate)lysine. The segment at 469 to 502 (LMVTVKKSDIDKQRDIITGWKKFVADRKKTSGIC) is calmodulin-binding.

The protein belongs to the group II decarboxylase family. As to quaternary structure, homohexamer. Interacts with calmodulin with a 1:3 stoichiometry. The cofactor is pyridoxal 5'-phosphate. Expressed in roots. Detected at low levels in shoots of young seedlings. Not detected in the root tips or in the central vascular bundle in the elongating region of mature roots.

It catalyses the reaction L-glutamate + H(+) = 4-aminobutanoate + CO2. Its activity is regulated as follows. Up-regulated by calmodulin binding at physiological pH. Catalyzes the conversion of glutamate to 4-aminobutanoate (GABA). The calmodulin-binding is calcium-dependent and it is proposed to directly or indirectly form a calcium regulated control of GABA biosynthesis. The sequence is that of Glutamate decarboxylase 1 (GAD1) from Arabidopsis thaliana (Mouse-ear cress).